The following is a 266-amino-acid chain: Putative hydro-lyase Jann_2570 (266 aa).

The protein belongs to the D-glutamate cyclase family.

This is Putative hydro-lyase Jann_2570 from Jannaschia sp. (strain CCS1).